Here is a 124-residue protein sequence, read N- to C-terminus: Non-structural protein 2 (124 aa).

Positions 121 to 124 (DLNP) match the DLNP; interaction with MAP1B motif.

This sequence belongs to the pneumovirus non-structural protein 2 family. In terms of assembly, monomer (instable). Homomultimer. Heteromultimer with NS1. Interacts with host RIGI (via N-terminus); this interaction prevents host signaling pathway involved in interferon production. Interacts with host MAP1B/microtubule-associated protein 1B.

It is found in the host mitochondrion. Functionally, plays a major role in antagonizing the type I IFN-mediated antiviral response. Acts cooperatively with NS1 to repress activation and nuclear translocation of host IFN-regulatory factor IRF3. Interacts with the host cytoplasmic sensor of viral nucleic acids RIGI and prevents the interaction with its downstream partner MAVS. Together with NS2, participates in the proteasomal degradation of host STAT2, IRF3, IRF7, TBK1 and RIGI through a NS-degradasome involving CUL2 and Elongin-C. The degradasome requires an intact mitochondrial MAVS. Induces host SOCS1 expression. Induces activation of NF-kappa-B. Suppresses premature apoptosis by an NF-kappa-B-dependent, interferon-independent mechanism promoting continued viral replication. This is Non-structural protein 2 (1B) from Homo sapiens (Human).